The chain runs to 2150 residues: Hybrid signal transduction histidine kinase A (2150 aa).

Over residues methionine 1 to asparagine 10 the composition is skewed to basic and acidic residues. Disordered stretches follow at residues methionine 1 to glutamine 41, histidine 68 to serine 149, asparagine 184 to arginine 267, lysine 286 to glycine 323, threonine 339 to serine 359, asparagine 415 to arginine 505, serine 520 to glycine 546, and lysine 560 to threonine 733. Positions proline 19–threonine 32 are enriched in polar residues. Over residues histidine 68–glutamine 81 the composition is skewed to low complexity. Positions histidine 82–isoleucine 104 are enriched in polar residues. 2 stretches are compositionally biased toward low complexity: residues asparagine 105–asparagine 145 and asparagine 184–isoleucine 244. Over residues proline 289 to valine 304 the composition is skewed to polar residues. 3 stretches are compositionally biased toward low complexity: residues asparagine 305–serine 318, glycine 344–serine 359, and asparagine 415–serine 447. The span at proline 448–arginine 468 shows a compositional bias: polar residues. 3 stretches are compositionally biased toward low complexity: residues asparagine 469–isoleucine 485, serine 520–asparagine 545, and asparagine 565–asparagine 600. Residues serine 614 to asparagine 628 are compositionally biased toward polar residues. Positions asparagine 657–asparagine 727 are enriched in low complexity. The chain crosses the membrane as a helical span at residues alanine 772–leucine 792. Positions serine 838–alanine 1082 constitute a CHASE domain. A helical transmembrane segment spans residues proline 1098–valine 1118. A coiled-coil region spans residues asparagine 1139–alanine 1164. 2 disordered regions span residues leucine 1209–phenylalanine 1228 and valine 1233–glycine 1252. The PAS domain occupies serine 1235–glutamate 1317. The PAC domain occupies methionine 1321–glutamate 1376. Positions threonine 1393–leucine 1620 constitute a Histidine kinase domain. Position 1396 is a phosphohistidine; by autocatalysis (histidine 1396). Disordered stretches follow at residues glycine 1874–phenylalanine 1893, histidine 1933–serine 1952, and glutamine 1962–valine 2017. 3 stretches are compositionally biased toward low complexity: residues asparagine 1878–phenylalanine 1893, asparagine 1935–serine 1952, and glutamine 1962–leucine 2002. The region spanning lysine 2026–glycine 2146 is the Response regulatory domain. At aspartate 2076 the chain carries 4-aspartylphosphate.

In terms of assembly, interacts with SDF-2, an acbA peptide involved in sporulation.

It localises to the cell membrane. It catalyses the reaction ATP + protein L-histidine = ADP + protein N-phospho-L-histidine.. Its function is as follows. Acts as a receptor histidine kinase for the cytokinin SDF-2 in a signal transduction pathway that regulates prestalk gene expression and controls terminal differentiation of prespore cells. Binding of SDF-2 to this protein inhibits phosphorelay and induces rapid sporulation. This protein undergoes an ATP-dependent autophosphorylation at a conserved histidine residue in the kinase core, and a phosphoryl group is then transferred to a conserved aspartate residue in the receiver domain. The chain is Hybrid signal transduction histidine kinase A (dhkA) from Dictyostelium discoideum (Social amoeba).